The chain runs to 280 residues: Dopamine receptor-interacting protein 1 (280 aa).

Interacts with DRD1, the dopamine D1 receptor.

In terms of biological role, could be a regulator of the dopamine receptor signaling pathway. This Bos taurus (Bovine) protein is Dopamine receptor-interacting protein 1 (DORIP1).